The sequence spans 1006 residues: MHYDGHVRFDLPPQGSVLARNVSTRSCPPRTSPAVDLEEEEEESSVDGKGDRKSTGLKLSKKKARRRHTDDPSKECFTLKFDLNVDIETEIVPAMKKKSLGEVLLPVFERKGIALGKVDIYLDQSNTPLSLTFEAYRFGGHYLRVKAPAKPGDEGKVEQGMKDSKSLSLPILRPAGTGPPALERVDAQSRRESLDILAPGRRRKNMSEFLGEASIPGQEPPTPSSCSLPSGSSGSTNTGDSWKNRAASRFSGFFSSGPSTSAFGREVDKMEQLEGKLHTYSLFGLPRLPRGLRFDHDSWEEEYDEDEDEDNACLRLEDSWRELIDGHEKLTRRQCHQQEAVWELLHTEASYIRKLRVIINLFLCCLLNLQESGLLCEVEAERLFSNIPEIAQLHRRLWASVMAPVLEKARRTRALLQPGDFLKGFKMFGSLFKPYIRYCMEEEGCMEYMRGLLRDNDLFRAYITWAEKHPQCQRLKLSDMLAKPHQRLTKYPLLLKSVLRKTEEPRAKEAVVAMIGSVERFIHHVNACMRQRQERQRLAAVVSRIDAYEVVESSSDEVDKLLKEFLHLDLTAPIPGASPEETRQLLLEGSLRMKEGKDSKMDVYCFLFTDLLLVTKAVKKAERTRVIRPPLLVDKIVCRELRDPGSFLLIYLNEFHSAVGAYTFQASGQALCRGWVDTIYNAQNQLQQLRAQEPPGSQQPLQSLEEEEDEQEEEEEEEEEEEEGEDSGTSAASSPTIMRKSSGSPDSQHCASDGSTETLAMVVVEPGDTLSSPEFDSGPFSSQSDETSLSTTASSATPTSELLPLGPVDGRSCSMDSAYGTLSPTSLQDFVAPGPMAELVPRAPESPRVPSPPPSPRLRRRTPVQLLSCPPHLLKSKSEASLLQLLAGAGTHGTPSAPSRSLSELCLAVPAPGIRTQGSPQEAGPSWDCRGAPSPGSGPGLVGCLAGEPAGSHRKRCGDLPSGASPRVQPEPPPGVSAQHRKLTLAQLYRIRTTLLLNSTLTASEV.

Disordered stretches follow at residues 1–71, 148–198, and 212–242; these read MHYD…HTDD, PAKP…DILA, and EASI…GDSW. Over residues 36 to 45 the composition is skewed to acidic residues; the sequence is DLEEEEEESS. 2 stretches are compositionally biased toward basic and acidic residues: residues 151-165 and 183-194; these read PGDE…KDSK and ERVDAQSRRESL. Positions 224 to 242 are enriched in low complexity; that stretch reads SSCSLPSGSSGSTNTGDSW. The DH domain occupies 336-528; sequence HQQEAVWELL…ERFIHHVNAC (193 aa). Residues 584-684 form the PH domain; the sequence is QLLLEGSLRM…WVDTIYNAQN (101 aa). 3 disordered regions span residues 690–754, 768–820, and 837–863; these read RAQE…ASDG, DTLS…SAYG, and AELV…RRTP. Residues 704 to 726 are compositionally biased toward acidic residues; the sequence is LEEEEDEQEEEEEEEEEEEEGED. Polar residues-rich tracts occupy residues 727–754 and 769–785; these read SGTS…ASDG and TLSS…SQSD. Residue Thr-729 is modified to Phosphothreonine. Position 734 is a phosphoserine (Ser-734). Residues 786 to 803 are compositionally biased toward low complexity; that stretch reads ETSLSTTASSATPTSELL. Positions 847–856 are enriched in pro residues; sequence PRVPSPPPSP. Phosphoserine occurs at positions 851, 876, and 881. Residues 950–979 form a disordered region; that stretch reads AGSHRKRCGDLPSGASPRVQPEPPPGVSAQ.

As to quaternary structure, interacts with GIPC1/synectin and RHOA. Predominantly expressed in the peripheral nervous system and brain. Highest expression is observed in heart, lung, kidney, testis and moderate expression is present in spleen, pancreas, skeletal muscle, ovary and liver. Weakly expressed in glioblastoma (GBM) cell lines.

It is found in the cytoplasm. The protein resides in the perinuclear region. It localises to the cell membrane. The protein localises to the cell junction. Its subcellular location is the cell projection. It is found in the lamellipodium. In terms of biological role, functions as a guanine exchange factor (GEF) for RAB26 and thus regulates autophagy of synaptic vesicles in axon terminal of motoneurons. Involved in the control of neuronal cell differentiation. Plays a role in angiogenesis through regulation of endothelial cells chemotaxis. Also affects the migration, adhesion, and matrix/bone degradation in macrophages and osteoclasts. In Homo sapiens (Human), this protein is Pleckstrin homology domain-containing family G member 5 (PLEKHG5).